We begin with the raw amino-acid sequence, 331 residues long: Meiotically up-regulated gene 172 protein (331 aa).

A coiled-coil region spans residues Ile-72–Arg-166.

Belongs to the ADIP family.

The protein localises to the cytoplasm. Has a role in meiosis. This is Meiotically up-regulated gene 172 protein (mug172) from Schizosaccharomyces pombe (strain 972 / ATCC 24843) (Fission yeast).